The primary structure comprises 193 residues: Potassium-transporting ATPase KdpC subunit (193 aa).

The helical transmembrane segment at 7 to 27 (PLVVIFAVLTVVTGMAYPAVM) threads the bilayer.

It belongs to the KdpC family. As to quaternary structure, the system is composed of three essential subunits: KdpA, KdpB and KdpC.

The protein resides in the cell inner membrane. In terms of biological role, part of the high-affinity ATP-driven potassium transport (or Kdp) system, which catalyzes the hydrolysis of ATP coupled with the electrogenic transport of potassium into the cytoplasm. This subunit acts as a catalytic chaperone that increases the ATP-binding affinity of the ATP-hydrolyzing subunit KdpB by the formation of a transient KdpB/KdpC/ATP ternary complex. The polypeptide is Potassium-transporting ATPase KdpC subunit (Burkholderia vietnamiensis (strain G4 / LMG 22486) (Burkholderia cepacia (strain R1808))).